A 481-amino-acid chain; its full sequence is MSYIKKLRARLDSGEVTAVELTKQYLAKIKDQDKSINSVITLCEAEALKEAENADAIISAGKQSLLTGIPILHKDLFCTKGIKTTAASKMLDNFVAPYDSTVTKNCKDQGMVTLGKLNMDEFAMGSTNEHSYYGAVSNPWDLDRVPGGSSGGSAAAVAAGFAPVSTGSDTGGSVRQPASFCGLTAMKPTYGSTSRFGMVAFASSFDQAGIFGHYAEDVAIMLDAISGECQYDSTCVGVKENHFTQDLEKDISGKVIGIDESLIKDLPAQIQEAVSKTLDNFKKLGAEIKSVKVPDLKEALSTYYIITPAEAAANLARYDGIRYGYRNPEARDLDELYRKSRTDGFGEEVKRRIMIGNYVLASSQYDSYYNKAQQLRKVMTDQINQIFEQVDVIFMPAAPSEAFKKGDKLDPVSAYLSDIYTIPANISGLPAIAFPIGFANDLPVGGQFMAKAFNDNVLTQMVTQYQNSYGIEEFILEQARI.

Catalysis depends on charge relay system residues Lys74 and Ser149. The active-site Acyl-ester intermediate is Ser173.

This sequence belongs to the amidase family. GatA subfamily. In terms of assembly, heterotrimer of A, B and C subunits.

The enzyme catalyses L-glutamyl-tRNA(Gln) + L-glutamine + ATP + H2O = L-glutaminyl-tRNA(Gln) + L-glutamate + ADP + phosphate + H(+). Its function is as follows. Allows the formation of correctly charged Gln-tRNA(Gln) through the transamidation of misacylated Glu-tRNA(Gln) in organisms which lack glutaminyl-tRNA synthetase. The reaction takes place in the presence of glutamine and ATP through an activated gamma-phospho-Glu-tRNA(Gln). The protein is Glutamyl-tRNA(Gln) amidotransferase subunit A of Francisella philomiragia subsp. philomiragia (strain ATCC 25017 / CCUG 19701 / FSC 153 / O#319-036).